A 126-amino-acid chain; its full sequence is Holo-[acyl-carrier-protein] synthase (126 aa).

2 residues coordinate Mg(2+): aspartate 8 and glutamate 60.

Belongs to the P-Pant transferase superfamily. AcpS family. It depends on Mg(2+) as a cofactor.

The protein resides in the cytoplasm. The enzyme catalyses apo-[ACP] + CoA = holo-[ACP] + adenosine 3',5'-bisphosphate + H(+). Transfers the 4'-phosphopantetheine moiety from coenzyme A to a Ser of acyl-carrier-protein. The polypeptide is Holo-[acyl-carrier-protein] synthase (Ehrlichia canis (strain Jake)).